A 441-amino-acid polypeptide reads, in one-letter code: Phenylalanine-4-hydroxylase (441 aa).

An ACT domain is found at 23 to 102 (FSISKGSDKI…KATTLQESSN (80 aa)). The Fe cation site is built by H273, H278, and E318.

Belongs to the biopterin-dependent aromatic amino acid hydroxylase family. As to quaternary structure, homotetramer. It depends on Fe(2+) as a cofactor.

The enzyme catalyses (6R)-L-erythro-5,6,7,8-tetrahydrobiopterin + L-phenylalanine + O2 = (4aS,6R)-4a-hydroxy-L-erythro-5,6,7,8-tetrahydrobiopterin + L-tyrosine. The catalysed reaction is (6R)-L-erythro-5,6,7,8-tetrahydrobiopterin + L-tryptophan + O2 = 5-hydroxy-L-tryptophan + (4aS,6R)-4a-hydroxy-L-erythro-5,6,7,8-tetrahydrobiopterin. The protein operates within amino-acid degradation; L-phenylalanine degradation; acetoacetate and fumarate from L-phenylalanine: step 1/6. Its function is as follows. Catalyzes the hydroxylation of L-phenylalanine. Hydroxylates L-tryptophan to 5-hydroxy-L-tryptophan but does not hydroxylate L-tyrosine to L-DOPA. It uses D-threo-tetrahydrodictyopterin (DH4), also known as dictyoperin, as a cofactor. The polypeptide is Phenylalanine-4-hydroxylase (pah) (Dictyostelium discoideum (Social amoeba)).